A 320-amino-acid polypeptide reads, in one-letter code: Cytochrome f (320 aa).

Positions Met-1–Ala-35 are cleaved as a signal peptide. Tyr-36, Cys-56, Cys-59, and His-60 together coordinate heme. Residues Val-286–Lys-306 traverse the membrane as a helical segment.

Belongs to the cytochrome f family. As to quaternary structure, the 4 large subunits of the cytochrome b6-f complex are cytochrome b6, subunit IV (17 kDa polypeptide, petD), cytochrome f and the Rieske protein, while the 4 small subunits are PetG, PetL, PetM and PetN. The complex functions as a dimer. Heme serves as cofactor.

Its subcellular location is the plastid. The protein resides in the chloroplast thylakoid membrane. Functionally, component of the cytochrome b6-f complex, which mediates electron transfer between photosystem II (PSII) and photosystem I (PSI), cyclic electron flow around PSI, and state transitions. This chain is Cytochrome f, found in Populus alba (White poplar).